The primary structure comprises 391 residues: Probable sugar efflux transporter (391 aa).

12 consecutive transmembrane segments (helical) span residues 16 to 36, 51 to 71, 82 to 102, 110 to 130, 138 to 158, 170 to 190, 210 to 230, 247 to 267, 277 to 297, 300 to 320, 338 to 358, and 361 to 381; these read VFVFSLSAFIFNTTEFVPVAL, VGLMITAYAWVVSLGSLPLML, LLFLFALFILSHILSALAWNF, MGIAFAHSIFWSITASLVIRV, QALGLLALGSSLAMILGLPLG, TFGVIGGVATLIALLMWKLLP, PLLMGIYLLVIMVISGHFTTY, ITTLMLFVFGLAGVVGSFLFG, FIAFAMVLVICPQLLLFVFKN, WVVFLQIFLWGIGITSLGISL, IYSGSYNVGIGSGALFGSIVI, and LGLGYIGFVGGALGLLALFWL.

Belongs to the major facilitator superfamily. SotB (TC 2.A.1.2) family.

It localises to the cell inner membrane. Functionally, involved in the efflux of sugars. The physiological role may be the reduction of the intracellular concentration of toxic sugars or sugar metabolites. The sequence is that of Probable sugar efflux transporter from Helicobacter pylori (strain ATCC 700392 / 26695) (Campylobacter pylori).